The following is a 244-amino-acid chain: 1-(5-phosphoribosyl)-5-[(5-phosphoribosylamino)methylideneamino] imidazole-4-carboxamide isomerase (244 aa).

The active-site Proton acceptor is the Asp8. Asp129 serves as the catalytic Proton donor.

Belongs to the HisA/HisF family.

It is found in the cytoplasm. It catalyses the reaction 1-(5-phospho-beta-D-ribosyl)-5-[(5-phospho-beta-D-ribosylamino)methylideneamino]imidazole-4-carboxamide = 5-[(5-phospho-1-deoxy-D-ribulos-1-ylimino)methylamino]-1-(5-phospho-beta-D-ribosyl)imidazole-4-carboxamide. It participates in amino-acid biosynthesis; L-histidine biosynthesis; L-histidine from 5-phospho-alpha-D-ribose 1-diphosphate: step 4/9. The chain is 1-(5-phosphoribosyl)-5-[(5-phosphoribosylamino)methylideneamino] imidazole-4-carboxamide isomerase from Geobacter sulfurreducens (strain ATCC 51573 / DSM 12127 / PCA).